A 193-amino-acid polypeptide reads, in one-letter code: Peptidyl-tRNA hydrolase (193 aa).

A tRNA-binding site is contributed by tyrosine 14. Histidine 19 (proton acceptor) is an active-site residue. TRNA-binding residues include phenylalanine 64, asparagine 66, and asparagine 112.

Belongs to the PTH family. In terms of assembly, monomer.

It is found in the cytoplasm. The catalysed reaction is an N-acyl-L-alpha-aminoacyl-tRNA + H2O = an N-acyl-L-amino acid + a tRNA + H(+). Its function is as follows. Hydrolyzes ribosome-free peptidyl-tRNAs (with 1 or more amino acids incorporated), which drop off the ribosome during protein synthesis, or as a result of ribosome stalling. Catalyzes the release of premature peptidyl moieties from peptidyl-tRNA molecules trapped in stalled 50S ribosomal subunits, and thus maintains levels of free tRNAs and 50S ribosomes. The chain is Peptidyl-tRNA hydrolase from Bartonella henselae (strain ATCC 49882 / DSM 28221 / CCUG 30454 / Houston 1) (Rochalimaea henselae).